The chain runs to 545 residues: Membrane protein insertase YidC (545 aa).

The next 4 helical transmembrane spans lie at Ile350 to Tyr370, Leu424 to Val444, Ala461 to Leu481, and Pro498 to Val518.

The protein belongs to the OXA1/ALB3/YidC family. Type 1 subfamily. Interacts with the Sec translocase complex via SecD. Specifically interacts with transmembrane segments of nascent integral membrane proteins during membrane integration.

It localises to the cell inner membrane. Its function is as follows. Required for the insertion and/or proper folding and/or complex formation of integral membrane proteins into the membrane. Involved in integration of membrane proteins that insert both dependently and independently of the Sec translocase complex, as well as at least some lipoproteins. Aids folding of multispanning membrane proteins. This chain is Membrane protein insertase YidC, found in Neisseria gonorrhoeae (strain ATCC 700825 / FA 1090).